A 430-amino-acid polypeptide reads, in one-letter code: 3-deoxy-D-manno-octulosonic acid transferase (430 aa).

A helical; Signal-anchor transmembrane segment spans residues 12–32; that stretch reads AFLVAAFLAAAPRIFYKVVFH. Glutamate 66 acts as the Proton acceptor in catalysis. Residues 274–275, 314–316, and 341–344 contribute to the CMP site; these read PR, MGI, and NLLE.

It belongs to the glycosyltransferase group 1 family. Glycosyltransferase 30 subfamily.

The protein localises to the cell inner membrane. It catalyses the reaction lipid IVA (E. coli) + CMP-3-deoxy-beta-D-manno-octulosonate = alpha-Kdo-(2-&gt;6)-lipid IVA (E. coli) + CMP + H(+). It carries out the reaction alpha-Kdo-(2-&gt;6)-lipid IVA (E. coli) + CMP-3-deoxy-beta-D-manno-octulosonate = alpha-Kdo-(2-&gt;4)-alpha-Kdo-(2-&gt;6)-lipid IVA (E. coli) + CMP + H(+). The catalysed reaction is alpha-Kdo-(2-&gt;4)-alpha-Kdo-(2-&gt;6)-lipid IVA (E. coli) + CMP-3-deoxy-beta-D-manno-octulosonate = alpha-Kdo-(2-&gt;8)-alpha-Kdo-(2-&gt;4)-alpha-Kdo-(2-&gt;6)-lipid IVA (E. coli) + CMP + H(+). Its pathway is bacterial outer membrane biogenesis; LPS core biosynthesis. Its function is as follows. Involved in lipopolysaccharide (LPS) biosynthesis. Catalyzes the transfer of three 3-deoxy-D-manno-octulosonate (Kdo) residues from CMP-Kdo to lipid IV(A), the tetraacyldisaccharide-1,4'-bisphosphate precursor of lipid A. Thus generates the genus-specific LPS epitope of Chlamydia, composed of the trisaccharide alpha-Kdo-(2-&gt;8)-alpha-Kdo-(2-&gt;4)-alpha-Kdo. In Chlamydia muridarum (strain MoPn / Nigg), this protein is 3-deoxy-D-manno-octulosonic acid transferase (waaA).